A 241-amino-acid chain; its full sequence is Purine nucleoside phosphorylase DeoD-type 1 (241 aa).

Histidine 5 contributes to the a purine D-ribonucleoside binding site. Phosphate is bound by residues glycine 21, arginine 25, arginine 44, and 88 to 91 (RVGS). Residues 180-182 (EME) and 204-205 (SD) each bind a purine D-ribonucleoside. The active-site Proton donor is the aspartate 205.

This sequence belongs to the PNP/UDP phosphorylase family. Homohexamer; trimer of homodimers.

The enzyme catalyses a purine D-ribonucleoside + phosphate = a purine nucleobase + alpha-D-ribose 1-phosphate. It catalyses the reaction a purine 2'-deoxy-D-ribonucleoside + phosphate = a purine nucleobase + 2-deoxy-alpha-D-ribose 1-phosphate. Functionally, catalyzes the reversible phosphorolytic breakdown of the N-glycosidic bond in the beta-(deoxy)ribonucleoside molecules, with the formation of the corresponding free purine bases and pentose-1-phosphate. The sequence is that of Purine nucleoside phosphorylase DeoD-type 1 from Vibrio cholerae serotype O1 (strain ATCC 39315 / El Tor Inaba N16961).